Consider the following 661-residue polypeptide: MSAAETNQVQESLEKLNLDSSSSPAAGGATTATTTNNAESSDATSSSVPADSAEEQGESSGIAENSASLYVGELNPSVNEATLFEIFSPIGQVASIRVCRDAVSKKSLGYAYVNYHKLEDGEKAIEELNYTPVEGRPCRIMWSQRDPSARRSGDGNIFIKNLHPAIDNKALHDTFSAFGKILSVKVATDDLGQSKCFGFVHYETEEAAQAAIESVNGMLLNDREVYVGKHVSKKDRESKLEEMKANYTNIYVKNIDLAYTEKEFEELFAPFGKITSIYLEKDAEGKSKGFGFVNFEEHEAAAKAVEELNDKEINGQKIYVGRAQKKRERTEELKKQYEAVRLEKLSKYQGVNLFVKNLDEQIDSEKLEEEFKPFGTITSSKVMVDDAGKSKGFGFVCFSTPEEATKAITEMNQRMVNGKPLYVALAQRKDVRRSQLEQQIQARNQMRMQNAAAAGGLPGQFMPPMFYGQQGFFPPNGRGNAPFPGPNPQMMMRGRGQPFPEQWPRPGPNGQPVPVYGMPPQFQDFNGQNMRPQQQQQQQQQQQQQQQQQRGYYPNRPAGGNVPAKDLAALIANAPLEAQKRILGEELYQRIVATGKAQEPEAAGKITGMMLGLENQEILDLLDDEELFNNHFEEALNAFEEYKNSEGANAATGAPAPSEEA.

Residues 1–11 (MSAAETNQVQE) are compositionally biased toward polar residues. Residues 1–61 (MSAAETNQVQ…SAEEQGESSG (61 aa)) form a disordered region. The span at 20-51 (SSSSPAAGGATTATTTNNAESSDATSSSVPAD) shows a compositional bias: low complexity. 4 RRM domains span residues 67-145 (ASLY…WSQR), 155-232 (GNIF…KHVS), 248-325 (TNIY…RAQK), and 351-428 (VNLF…LAQR). The tract at residues 473-563 (FPPNGRGNAP…PNRPAGGNVP (91 aa)) is disordered. The segment covering 501–511 (EQWPRPGPNGQ) has biased composition (pro residues). The span at 523–532 (QDFNGQNMRP) shows a compositional bias: polar residues. Low complexity predominate over residues 533–549 (QQQQQQQQQQQQQQQQQ). A PABC domain is found at 563 to 644 (PAKDLAALIA…ALNAFEEYKN (82 aa)).

Belongs to the polyadenylate-binding protein type-1 family.

Its subcellular location is the cytoplasm. The protein resides in the nucleus. Binds the poly(A) tail of mRNA. Appears to be an important mediator of the multiple roles of the poly(A) tail in mRNA biogenesis, stability and translation. In the nucleus, involved in both mRNA cleavage and polyadenylation. Is also required for efficient mRNA export to the cytoplasm. Acts in concert with a poly(A)-specific nuclease (PAN) to affect poly(A) tail shortening, which may occur concomitantly with either nucleocytoplasmic mRNA transport or translational initiation. In the cytoplasm, stimulates translation initiation and regulates mRNA decay through translation termination-coupled poly(A) shortening, probably mediated by PAN. This chain is Polyadenylate-binding protein, cytoplasmic and nuclear (PAB1), found in Lodderomyces elongisporus (strain ATCC 11503 / CBS 2605 / JCM 1781 / NBRC 1676 / NRRL YB-4239) (Yeast).